The sequence spans 660 residues: Methionine--tRNA ligase (660 aa).

Positions 15-25 (YYPSDKLHIGH) match the 'HIGH' region motif. The 'KMSKS' region motif lies at 311 to 315 (KMSKS). An ATP-binding site is contributed by Lys-314. Positions 535–554 (LMGGSKKPEEAPKDEKEESD) are disordered. Residues 540–550 (KKPEEAPKDEK) show a composition bias toward basic and acidic residues. Positions 560–660 (DFSKVELRIA…GALPNGSLVK (101 aa)) constitute a tRNA-binding domain.

Belongs to the class-I aminoacyl-tRNA synthetase family. MetG type 2B subfamily. Homodimer.

The protein resides in the cytoplasm. The enzyme catalyses tRNA(Met) + L-methionine + ATP = L-methionyl-tRNA(Met) + AMP + diphosphate. Its function is as follows. Is required not only for elongation of protein synthesis but also for the initiation of all mRNA translation through initiator tRNA(fMet) aminoacylation. The polypeptide is Methionine--tRNA ligase (metG) (Halalkalibacterium halodurans (strain ATCC BAA-125 / DSM 18197 / FERM 7344 / JCM 9153 / C-125) (Bacillus halodurans)).